Here is a 327-residue protein sequence, read N- to C-terminus: Cyclic AMP-responsive element-binding protein 1 (327 aa).

Disordered regions lie at residues 1-26 (MTME…QQMT) and 94-113 (SEDS…RREI). The region spanning 87 to 146 (QISTIAESEDSQESVDSVTDSQKRREILSRRPSYRKILNDLSSDAPGVPRIEEEKSEEET) is the KID domain. The residue at position 119 (Ser-119) is a Phosphoserine; by CaMK1, CaMK2, CaMK4, PKB/AKT1 or PKB/AKT2, RPS6KA3, RPS6KA4, RPS6KA5, SGK1 and TSSK4. Lys-122 participates in a covalent cross-link: Glycyl lysine isopeptide (Lys-Gly) (interchain with G-Cter in SUMO2). The segment at 125–148 (NDLSSDAPGVPRIEEEKSEEETSA) is disordered. Ser-128 carries the phosphoserine modification. Ser-257 is modified (phosphoserine; by HIPK2). Residues 269–327 (ARKREVRLMKNREAARECRRKKKEYVKCLENRVAVLENQNKTLIEELKALKDLYCHKSD) enclose the bZIP domain. A basic motif region spans residues 270 to 295 (RKREVRLMKNREAARECRRKKKEYVK). Glycyl lysine isopeptide (Lys-Gly) (interchain with G-Cter in SUMO1) cross-links involve residues Lys-271 and Lys-290. The segment at 297–318 (LENRVAVLENQNKTLIEELKAL) is leucine-zipper.

It belongs to the bZIP family. In terms of assembly, interacts with PPRC1. Binds DNA as a dimer. This dimer is stabilized by magnesium ions. Interacts, through the bZIP domain, with the coactivators CRTC1/TORC1, CRTC2/TORC2 and CRTC3/TORC3. When phosphorylated on Ser-119, binds CREBBP. Interacts with CREBL2; regulates CREB1 phosphorylation, stability and transcriptional activity. Interacts (phosphorylated form) with TOX3. Interacts with ARRB1. Binds to HIPK2. Interacts with SGK1. Interacts with TSSK4; this interaction facilitates phosphorylation on Ser-119. Forms a complex with KMT2A and CREBBP. Interacts with TOX4; CREB1 is required for full induction of TOX4-dependent activity and the interaction is increased by cAMP and inhibited by insulin. (Microbial infection) Interacts with hepatitis B virus/HBV protein X. As to quaternary structure, (Microbial infection) Interacts with HTLV-1 protein Tax. Post-translationally, stimulated by phosphorylation. Phosphorylation of both Ser-119 and Ser-128 in the SCN regulates the activity of CREB and participates in circadian rhythm generation. Phosphorylation of Ser-119 allows CREBBP binding. In liver, phosphorylation is induced by fasting or glucagon in a circadian fashion. CREBL2 positively regulates phosphorylation at Ser-119 thereby stimulating CREB1 transcriptional activity. Phosphorylated upon calcium influx by CaMK4 and CaMK2 on Ser-119. CaMK4 is much more potent than CaMK2 in activating CREB. Phosphorylated by CaMK2 on Ser-128. Phosphorylation of Ser-128 blocks CREB-mediated transcription even when Ser-119 is phosphorylated. Phosphorylated by CaMK1. Phosphorylation of Ser-257 by HIPK2 in response to genotoxic stress promotes CREB1 activity, facilitating the recruitment of the coactivator CBP. Phosphorylated at Ser-119 by RPS6KA3, RPS6KA4 and RPS6KA5 in response to mitogenic or stress stimuli. Phosphorylated by TSSK4 on Ser-119. In terms of processing, sumoylated with SUMO1. Sumoylation on Lys-290, but not on Lys-271, is required for nuclear localization of this protein. Sumoylation is enhanced under hypoxia, promoting nuclear localization and stabilization.

The protein localises to the nucleus. Functionally, phosphorylation-dependent transcription factor that stimulates transcription upon binding to the DNA cAMP response element (CRE), a sequence present in many viral and cellular promoters. Transcription activation is enhanced by the TORC coactivators which act independently of Ser-119 phosphorylation. Involved in different cellular processes including the synchronization of circadian rhythmicity and the differentiation of adipose cells. Regulates the expression of apoptotic and inflammatory response factors in cardiomyocytes in response to ERFE-mediated activation of AKT signaling. This is Cyclic AMP-responsive element-binding protein 1 (CREB1) from Homo sapiens (Human).